The sequence spans 203 residues: MSRYTGPSWKVSRRLGISLSGTGKELARRPYKPGQHGPNSRGKVSEYGMQLTEKQKLRHMYGMNERQFRTLFIKASKIKEGKHGVNFMVLLEQRLDNVVYRLGLATTRRQARQLVNHGHITVDGKRVDIPSYHVEVGQVIGVREKSQNISTIKEAVEATVGRPAFVSFDTEKLEGSFTRLPERDELYPEIDEALVVEYYNQKL.

The segment at 22–45 is disordered; sequence TGKELARRPYKPGQHGPNSRGKVS. The S4 RNA-binding domain occupies 93-156; the sequence is QRLDNVVYRL…QNISTIKEAV (64 aa).

This sequence belongs to the universal ribosomal protein uS4 family. As to quaternary structure, part of the 30S ribosomal subunit. Contacts protein S5. The interaction surface between S4 and S5 is involved in control of translational fidelity.

Its function is as follows. One of the primary rRNA binding proteins, it binds directly to 16S rRNA where it nucleates assembly of the body of the 30S subunit. Functionally, with S5 and S12 plays an important role in translational accuracy. The sequence is that of Small ribosomal subunit protein uS4 from Enterococcus faecalis (strain ATCC 700802 / V583).